We begin with the raw amino-acid sequence, 227 residues long: Cytochrome c oxidase subunit 2 (227 aa).

Over 1–14 the chain is Mitochondrial intermembrane; it reads MAYPMQLGFQDATS. A helical membrane pass occupies residues 15–45; the sequence is PIMEELLHFHDHTLMIVFLISSLVLYVISLM. The Mitochondrial matrix segment spans residues 46-59; it reads LTTKLTHTSTMDAQ. Residues 60–87 traverse the membrane as a helical segment; the sequence is EVETIWTILPAIILILIALPSLRILYMM. Residues 88 to 227 are Mitochondrial intermembrane-facing; the sequence is DEINNPSLTV…YFEKWSASML (140 aa). H161, C196, E198, C200, H204, and M207 together coordinate Cu cation. E198 is a Mg(2+) binding site. At Y218 the chain carries Phosphotyrosine.

The protein belongs to the cytochrome c oxidase subunit 2 family. Component of the cytochrome c oxidase (complex IV, CIV), a multisubunit enzyme composed of 14 subunits. The complex is composed of a catalytic core of 3 subunits MT-CO1, MT-CO2 and MT-CO3, encoded in the mitochondrial DNA, and 11 supernumerary subunits COX4I, COX5A, COX5B, COX6A, COX6B, COX6C, COX7A, COX7B, COX7C, COX8 and NDUFA4, which are encoded in the nuclear genome. The complex exists as a monomer or a dimer and forms supercomplexes (SCs) in the inner mitochondrial membrane with NADH-ubiquinone oxidoreductase (complex I, CI) and ubiquinol-cytochrome c oxidoreductase (cytochrome b-c1 complex, complex III, CIII), resulting in different assemblies (supercomplex SCI(1)III(2)IV(1) and megacomplex MCI(2)III(2)IV(2)). Found in a complex with TMEM177, COA6, COX18, COX20, SCO1 and SCO2. Interacts with TMEM177 in a COX20-dependent manner. Interacts with COX20. Interacts with COX16. It depends on Cu cation as a cofactor.

The protein localises to the mitochondrion inner membrane. The catalysed reaction is 4 Fe(II)-[cytochrome c] + O2 + 8 H(+)(in) = 4 Fe(III)-[cytochrome c] + 2 H2O + 4 H(+)(out). In terms of biological role, component of the cytochrome c oxidase, the last enzyme in the mitochondrial electron transport chain which drives oxidative phosphorylation. The respiratory chain contains 3 multisubunit complexes succinate dehydrogenase (complex II, CII), ubiquinol-cytochrome c oxidoreductase (cytochrome b-c1 complex, complex III, CIII) and cytochrome c oxidase (complex IV, CIV), that cooperate to transfer electrons derived from NADH and succinate to molecular oxygen, creating an electrochemical gradient over the inner membrane that drives transmembrane transport and the ATP synthase. Cytochrome c oxidase is the component of the respiratory chain that catalyzes the reduction of oxygen to water. Electrons originating from reduced cytochrome c in the intermembrane space (IMS) are transferred via the dinuclear copper A center (CU(A)) of subunit 2 and heme A of subunit 1 to the active site in subunit 1, a binuclear center (BNC) formed by heme A3 and copper B (CU(B)). The BNC reduces molecular oxygen to 2 water molecules using 4 electrons from cytochrome c in the IMS and 4 protons from the mitochondrial matrix. The sequence is that of Cytochrome c oxidase subunit 2 (MT-CO2) from Rusa unicolor (Sambar).